The following is a 129-amino-acid chain: Glycine cleavage system H protein (129 aa).

In terms of domain architecture, Lipoyl-binding spans 24–106; the sequence is SYTVGITEHA…YGEGWFFRVM (83 aa). Lys65 carries the N6-lipoyllysine modification.

It belongs to the GcvH family. In terms of assembly, the glycine cleavage system is composed of four proteins: P, T, L and H. The cofactor is (R)-lipoate.

The glycine cleavage system catalyzes the degradation of glycine. The H protein shuttles the methylamine group of glycine from the P protein to the T protein. The sequence is that of Glycine cleavage system H protein from Shewanella oneidensis (strain ATCC 700550 / JCM 31522 / CIP 106686 / LMG 19005 / NCIMB 14063 / MR-1).